Here is a 326-residue protein sequence, read N- to C-terminus: Siroheme decarboxylase NirDL subunit (326 aa).

Belongs to the Ahb/Nir family. Forms a complex composed of NirDL, NirG and NirH. All proteins are required for the total conversion of siroheme to didecarboxysiroheme.

The enzyme catalyses siroheme + 2 H(+) = 12,18-didecarboxysiroheme + 2 CO2. It participates in porphyrin-containing compound metabolism. In terms of biological role, involved in heme d1 biosynthesis. Catalyzes the decarboxylation of siroheme into didecarboxysiroheme. Siroheme is probably decarboxylated to monodecarboxysiroheme, which is in turn decarboxylated to didecarboxysiroheme. This is Siroheme decarboxylase NirDL subunit from Paracoccus pantotrophus (Thiosphaera pantotropha).